The sequence spans 239 residues: Probable transcriptional regulatory protein MG332 (239 aa).

Belongs to the TACO1 family.

The protein localises to the cytoplasm. This chain is Probable transcriptional regulatory protein MG332, found in Mycoplasma genitalium (strain ATCC 33530 / DSM 19775 / NCTC 10195 / G37) (Mycoplasmoides genitalium).